A 264-amino-acid polypeptide reads, in one-letter code: 5'-nucleotidase SurE (264 aa).

Residues aspartate 10, aspartate 11, serine 43, and asparagine 99 each contribute to the a divalent metal cation site.

This sequence belongs to the SurE nucleotidase family. The cofactor is a divalent metal cation.

The protein localises to the cytoplasm. It catalyses the reaction a ribonucleoside 5'-phosphate + H2O = a ribonucleoside + phosphate. Its function is as follows. Nucleotidase that shows phosphatase activity on nucleoside 5'-monophosphates. In Methanococcus vannielii (strain ATCC 35089 / DSM 1224 / JCM 13029 / OCM 148 / SB), this protein is 5'-nucleotidase SurE.